A 155-amino-acid chain; its full sequence is Cyanate hydratase (155 aa).

Residues arginine 95, glutamate 98, and serine 121 contribute to the active site.

Belongs to the cyanase family.

The catalysed reaction is cyanate + hydrogencarbonate + 3 H(+) = NH4(+) + 2 CO2. Catalyzes the reaction of cyanate with bicarbonate to produce ammonia and carbon dioxide. In Pseudomonas savastanoi pv. phaseolicola (strain 1448A / Race 6) (Pseudomonas syringae pv. phaseolicola (strain 1448A / Race 6)), this protein is Cyanate hydratase.